Reading from the N-terminus, the 215-residue chain is Vesicle-trafficking protein SEC22b-B (215 aa).

Residues 1-190 (MVLLTMIARL…RSDAKYLNTR (190 aa)) lie on the Cytoplasmic side of the membrane. The 114-residue stretch at 6 to 119 (MIARLADGLP…YSFIEFDTYI (114 aa)) folds into the Longin domain. A v-SNARE coiled-coil homology domain is found at 134 to 194 (NLSNINTELQ…KYLNTRSTYA (61 aa)). Residues 191–213 (STYAKLAAGGVFFIMLIVYIRFW) form a helical membrane-spanning segment. The Lumenal segment spans residues 214-215 (WL).

The protein belongs to the synaptobrevin family. As to quaternary structure, component of 2 distinct SNARE complexes.

The protein localises to the endoplasmic reticulum membrane. Its subcellular location is the endoplasmic reticulum-Golgi intermediate compartment membrane. It is found in the golgi apparatus. The protein resides in the cis-Golgi network membrane. It localises to the trans-Golgi network membrane. The protein localises to the melanosome. In terms of biological role, SNARE involved in targeting and fusion of ER-derived transport vesicles with the Golgi complex as well as Golgi-derived retrograde transport vesicles with the ER. The protein is Vesicle-trafficking protein SEC22b-B of Danio rerio (Zebrafish).